The following is a 399-amino-acid chain: MIKVDKLPDVFIKAMPVLQTLEDAGFEAYFVGGSVRDLLLDRHVHDVDITTSAYPEEVKELFAKSIDTGIRHGTVTVLYGGESYEITTFRTESGYQDYRRPDHVTFVQNLDEDLKRRDFTINALAMDLHGQIVDLFNGVEDLKNHIIRAVGDPEKRFHEDALRMMRAVRFTSQLKFNLEEKTEQAIKDNHELLKKISVERIREEFVKMGIGPHSRQAFQIFLDTQLSEDVPDFAGKKELLQIYPQLQFSPTLETSLWSLIIILLKLPDEDISKFMRDWKNSNAMTEQVERIIKFFDLISDHTPNDYELFQAGERTIINTIDVAHILGQPVASEALVDRYLALPIKKPAELAIDGRFLIKHGMRPGAELGHTLNKIRELVVSSRLENSPDAIEKYLEDLD.

Positions 33 and 36 each coordinate ATP. Positions 33 and 36 each coordinate CTP. Positions 46 and 48 each coordinate Mg(2+). Residues Arg117, Asp160, Arg163, Arg166, and Arg169 each contribute to the ATP site. The CTP site is built by Arg117, Asp160, Arg163, Arg166, and Arg169.

The protein belongs to the tRNA nucleotidyltransferase/poly(A) polymerase family. Bacterial CCA-adding enzyme type 3 subfamily. In terms of assembly, homodimer. It depends on Mg(2+) as a cofactor.

It catalyses the reaction a tRNA precursor + 2 CTP + ATP = a tRNA with a 3' CCA end + 3 diphosphate. The enzyme catalyses a tRNA with a 3' CCA end + 2 CTP + ATP = a tRNA with a 3' CCACCA end + 3 diphosphate. In terms of biological role, catalyzes the addition and repair of the essential 3'-terminal CCA sequence in tRNAs without using a nucleic acid template. Adds these three nucleotides in the order of C, C, and A to the tRNA nucleotide-73, using CTP and ATP as substrates and producing inorganic pyrophosphate. tRNA 3'-terminal CCA addition is required both for tRNA processing and repair. Also involved in tRNA surveillance by mediating tandem CCA addition to generate a CCACCA at the 3' terminus of unstable tRNAs. While stable tRNAs receive only 3'-terminal CCA, unstable tRNAs are marked with CCACCA and rapidly degraded. In Lactobacillus helveticus (strain DPC 4571), this protein is CCA-adding enzyme.